The following is a 199-amino-acid chain: Holliday junction branch migration complex subunit RuvA (199 aa).

The tract at residues 1–63 (MIASVRGEVL…EDSMTLYGFT (63 aa)) is domain I. Residues 64–142 (DAETRDLFLT…AAGAAGAPAG (79 aa)) form a domain II region. Residues 143-153 (AARNGHAVRGP) are flexible linker. A domain III region spans residues 153–199 (PVVEALVGLGFAAKQAEEATDKVLAAEPEAGTSGALRAALSLLGKSR).

The protein belongs to the RuvA family. As to quaternary structure, homotetramer. Forms an RuvA(8)-RuvB(12)-Holliday junction (HJ) complex. HJ DNA is sandwiched between 2 RuvA tetramers; dsDNA enters through RuvA and exits via RuvB. An RuvB hexamer assembles on each DNA strand where it exits the tetramer. Each RuvB hexamer is contacted by two RuvA subunits (via domain III) on 2 adjacent RuvB subunits; this complex drives branch migration. In the full resolvosome a probable DNA-RuvA(4)-RuvB(12)-RuvC(2) complex forms which resolves the HJ.

The protein localises to the cytoplasm. The RuvA-RuvB-RuvC complex processes Holliday junction (HJ) DNA during genetic recombination and DNA repair, while the RuvA-RuvB complex plays an important role in the rescue of blocked DNA replication forks via replication fork reversal (RFR). RuvA specifically binds to HJ cruciform DNA, conferring on it an open structure. The RuvB hexamer acts as an ATP-dependent pump, pulling dsDNA into and through the RuvAB complex. HJ branch migration allows RuvC to scan DNA until it finds its consensus sequence, where it cleaves and resolves the cruciform DNA. This chain is Holliday junction branch migration complex subunit RuvA, found in Mycobacterium avium (strain 104).